The chain runs to 728 residues: 1,4-alpha-glucan branching enzyme GlgB (728 aa).

Aspartate 405 functions as the Nucleophile in the catalytic mechanism. The active-site Proton donor is the glutamate 458.

The protein belongs to the glycosyl hydrolase 13 family. GlgB subfamily. As to quaternary structure, monomer.

The enzyme catalyses Transfers a segment of a (1-&gt;4)-alpha-D-glucan chain to a primary hydroxy group in a similar glucan chain.. It participates in glycan biosynthesis; glycogen biosynthesis. Functionally, catalyzes the formation of the alpha-1,6-glucosidic linkages in glycogen by scission of a 1,4-alpha-linked oligosaccharide from growing alpha-1,4-glucan chains and the subsequent attachment of the oligosaccharide to the alpha-1,6 position. The protein is 1,4-alpha-glucan branching enzyme GlgB of Escherichia coli O6:K15:H31 (strain 536 / UPEC).